The primary structure comprises 442 residues: Kelch domain-containing protein 10 (442 aa).

A disordered region spans residues 1–57; the sequence is MSAAQGWDRNRRRGGGAAGAGGGGSGAGGGSGGSGGRGTGQLNRFVQLSGRPHLPGK. R13 carries the post-translational modification Omega-N-methylarginine. Residues 15–39 show a composition bias toward gly residues; sequence GGAAGAGGGGSGAGGGSGGSGGRGT. 6 Kelch repeats span residues 87-154, 155-198, 199-260, 261-319, 320-364, and 365-403; these read RPPP…PREL, ASMS…ALLS, CRGK…PEER, YRHE…RRCH, SCVQ…PEPV, and YFHC…LVVP. Residues 401–442 are interaction with CUL2; that stretch reads VVPSLLELAWEKLLAAFPNLANLSRTQLLHLGLTQGLIERLK.

It belongs to the KLHDC10 family. Component of a CRL2 E3 ubiquitin-protein ligase complex, also named ECS (Elongin BC-CUL2/5-SOCS-box protein) complex, composed of CUL2, Elongin BC (ELOB and ELOC), RBX1 and substrate-specific adapter KLHDC10. Interacts (via the 6 Kelch repeats) with PPP5C.

The protein resides in the nucleus. It is found in the cytoplasm. It functions in the pathway protein modification; protein ubiquitination. In terms of biological role, substrate-recognition component of a Cul2-RING (CRL2) E3 ubiquitin-protein ligase complex of the DesCEND (destruction via C-end degrons) pathway, which recognizes a C-degron located at the extreme C-terminus of target proteins, leading to their ubiquitination and degradation. The C-degron recognized by the DesCEND pathway is usually a motif of less than ten residues and can be present in full-length proteins, truncated proteins or proteolytically cleaved forms. The CRL2(KLHDC10) complex specifically recognizes proteins with a proline-glycine (Pro-Gly) or an alanine tail (CAT tail) at the C-terminus, leading to their ubiquitination and degradation. The CRL2(KLHDC10) complex is involved in the ribosome-associated quality control (RQC) pathway, which mediates the extraction of incompletely synthesized nascent chains from stalled ribosomes: CRL2(KLHDC10) acts downstream of NEMF and recognizes CAT tails associated with stalled nascent chains, leading to their ubiquitination and degradation. Participates in the oxidative stress-induced cell death through MAP3K5 activation. Inhibits PPP5C phosphatase activity on MAP3K5. Acts as a regulator of necroptosis. The polypeptide is Kelch domain-containing protein 10 (Homo sapiens (Human)).